A 315-amino-acid polypeptide reads, in one-letter code: Prephenate dehydratase (315 aa).

Residues 3-189 form the Prephenate dehydratase domain; it reads RIAYLGPEGT…ARTRFLLIGV (187 aa). In terms of domain architecture, ACT spans 203-280; it reads SAVLRIANVP…ADVRYLGSWP (78 aa).

In terms of assembly, homodimer.

It catalyses the reaction prephenate + H(+) = 3-phenylpyruvate + CO2 + H2O. It functions in the pathway amino-acid biosynthesis; L-phenylalanine biosynthesis; phenylpyruvate from prephenate: step 1/1. The chain is Prephenate dehydratase (pheA) from Mycobacterium ulcerans (strain Agy99).